The primary structure comprises 312 residues: Very-long-chain 3-oxoacyl-CoA reductase (312 aa).

The helical transmembrane segment at 4 to 24 threads the bilayer; sequence ALPAAGFLYWVGASTVAYLAL. An NADP(+)-binding site is contributed by 50-79; that stretch reads GEWAVVTGGTDGIGKSYAEELAKRGMKIVL. The next 2 helical transmembrane spans lie at 182 to 202 and 271 to 291; these read GAILNISSASGMYPVPLLTIY and GYPIHSLVASVSASLPSWLYF. Ser-189 lines the substrate pocket. Catalysis depends on Tyr-202, which acts as the Proton acceptor. The Di-lysine motif signature appears at 308 to 312; sequence KMKMN.

This sequence belongs to the short-chain dehydrogenases/reductases (SDR) family. 17-beta-HSD 3 subfamily.

Its subcellular location is the endoplasmic reticulum membrane. It carries out the reaction a very-long-chain (3R)-3-hydroxyacyl-CoA + NADP(+) = a very-long-chain 3-oxoacyl-CoA + NADPH + H(+). The catalysed reaction is 17beta-estradiol + NAD(+) = estrone + NADH + H(+). The enzyme catalyses 17beta-estradiol + NADP(+) = estrone + NADPH + H(+). It catalyses the reaction 3-oxooctadecanoyl-CoA + NADPH + H(+) = (3R)-hydroxyoctadecanoyl-CoA + NADP(+). It carries out the reaction (7Z,10Z,13Z,16Z)-3-oxodocosatetraenoyl-CoA + NADPH + H(+) = (3R)-hydroxy-(7Z,10Z,13Z,16Z)-docosatetraenoyl-CoA + NADP(+). The catalysed reaction is 3-oxo-(7Z,10Z,13Z,16Z,19Z)-docosapentaenoyl-CoA + NADPH + H(+) = (3R)-hydroxy-(7Z,10Z,13Z,16Z,19Z)-docosapentaenoyl-CoA + NADP(+). The enzyme catalyses (8Z,11Z,14Z)-3-oxoeicosatrienoyl-CoA + NADPH + H(+) = (3R)-hydroxy-(8Z,11Z,14Z)-eicosatrienoyl-CoA + NADP(+). It functions in the pathway lipid metabolism; fatty acid biosynthesis. Its pathway is steroid biosynthesis; estrogen biosynthesis. Its function is as follows. Catalyzes the second of the four reactions of the long-chain fatty acids elongation cycle. This endoplasmic reticulum-bound enzymatic process, allows the addition of two carbons to the chain of long- and very long-chain fatty acids/VLCFAs per cycle. This enzyme has a 3-ketoacyl-CoA reductase activity, reducing 3-ketoacyl-CoA to 3-hydroxyacyl-CoA, within each cycle of fatty acid elongation. Thereby, it may participate in the production of VLCFAs of different chain lengths that are involved in multiple biological processes as precursors of membrane lipids and lipid mediators. May also catalyze the transformation of estrone (E1) into estradiol (E2) and play a role in estrogen formation. The polypeptide is Very-long-chain 3-oxoacyl-CoA reductase (HSD17B12) (Bos taurus (Bovine)).